A 417-amino-acid polypeptide reads, in one-letter code: NADH-quinone oxidoreductase subunit D (417 aa).

It belongs to the complex I 49 kDa subunit family. As to quaternary structure, NDH-1 is composed of 14 different subunits. Subunits NuoB, C, D, E, F, and G constitute the peripheral sector of the complex.

The protein resides in the cell inner membrane. The catalysed reaction is a quinone + NADH + 5 H(+)(in) = a quinol + NAD(+) + 4 H(+)(out). NDH-1 shuttles electrons from NADH, via FMN and iron-sulfur (Fe-S) centers, to quinones in the respiratory chain. The immediate electron acceptor for the enzyme in this species is believed to be ubiquinone. Couples the redox reaction to proton translocation (for every two electrons transferred, four hydrogen ions are translocated across the cytoplasmic membrane), and thus conserves the redox energy in a proton gradient. The protein is NADH-quinone oxidoreductase subunit D of Methylobacillus flagellatus (strain ATCC 51484 / DSM 6875 / VKM B-1610 / KT).